Reading from the N-terminus, the 760-residue chain is Catalase-peroxidase (760 aa).

The signal sequence occupies residues 1-45 (MKGTPFRSPHLYQEGSSCMHRTIRSVAAVLTVVLSATIPMVPAWS). A cross-link (tryptophyl-tyrosyl-methioninium (Trp-Tyr) (with M-271)) is located at residues 124–245 (WHGAGTYRTY…LAATQMGLIY (122 aa)). Residue H125 is the Proton acceptor of the active site. The tryptophyl-tyrosyl-methioninium (Tyr-Met) (with W-124) cross-link spans 245 to 271 (YVNPEGPNGVPDPVAAARDIREAFGGM). H286 contributes to the heme b binding site.

The protein belongs to the peroxidase family. Peroxidase/catalase subfamily. As to quaternary structure, homodimer or homotetramer. Heme b is required as a cofactor. Post-translationally, formation of the three residue Trp-Tyr-Met cross-link is important for the catalase, but not the peroxidase activity of the enzyme.

It catalyses the reaction H2O2 + AH2 = A + 2 H2O. It carries out the reaction 2 H2O2 = O2 + 2 H2O. Its function is as follows. Bifunctional enzyme with both catalase and broad-spectrum peroxidase activity. This chain is Catalase-peroxidase, found in Granulibacter bethesdensis (strain ATCC BAA-1260 / CGDNIH1).